The sequence spans 324 residues: Phospho-N-acetylmuramoyl-pentapeptide-transferase (324 aa).

Transmembrane regions (helical) follow at residues 5–25 (VILFTAGLAFIITVVLSPIFI), 55–75 (GGLMILLSLSITTWLMSDIFF), 81–101 (TYMLLFVTVGYGLLGFIDDFI), 122–142 (LIALIFYFFFQHYSMSTVVSI), 147–167 (VSLDLGVAYVLLIIFMLVGGS), 176–196 (LDGLLAGTAAIAFGAYAVLAW), 203–223 (VAIFSVAVVGAVLGFLVFNAH), 227–247 (VFMGDTGSLALGGAIVTIAIL), 250–270 (LEILLVIIGGVFVIETLSVII), and 302–322 (VVVTFWAVGLLFAILGIYIEV).

The protein belongs to the glycosyltransferase 4 family. MraY subfamily. It depends on Mg(2+) as a cofactor.

It is found in the cell membrane. It carries out the reaction UDP-N-acetyl-alpha-D-muramoyl-L-alanyl-gamma-D-glutamyl-meso-2,6-diaminopimeloyl-D-alanyl-D-alanine + di-trans,octa-cis-undecaprenyl phosphate = di-trans,octa-cis-undecaprenyl diphospho-N-acetyl-alpha-D-muramoyl-L-alanyl-D-glutamyl-meso-2,6-diaminopimeloyl-D-alanyl-D-alanine + UMP. Its pathway is cell wall biogenesis; peptidoglycan biosynthesis. Catalyzes the initial step of the lipid cycle reactions in the biosynthesis of the cell wall peptidoglycan: transfers peptidoglycan precursor phospho-MurNAc-pentapeptide from UDP-MurNAc-pentapeptide onto the lipid carrier undecaprenyl phosphate, yielding undecaprenyl-pyrophosphoryl-MurNAc-pentapeptide, known as lipid I. The chain is Phospho-N-acetylmuramoyl-pentapeptide-transferase from Anoxybacillus flavithermus (strain DSM 21510 / WK1).